A 138-amino-acid chain; its full sequence is Small ribosomal subunit protein bS18m (138 aa).

It belongs to the bacterial ribosomal protein bS18 family. As to quaternary structure, component of the mitochondrial small ribosomal subunit. Mature mitochondrial ribosomes consist of a small (37S) and a large (54S) subunit. The 37S subunit contains at least 33 different proteins and 1 molecule of RNA (15S). The 54S subunit contains at least 45 different proteins and 1 molecule of RNA (21S).

It is found in the mitochondrion. The chain is Small ribosomal subunit protein bS18m (RSM18) from Saccharomyces cerevisiae (strain RM11-1a) (Baker's yeast).